A 484-amino-acid chain; its full sequence is Protein phosphatase 1B (484 aa).

The segment covering 1–14 (MGAFLDKPKTEKHN) has biased composition (basic and acidic residues). The segment at 1–20 (MGAFLDKPKTEKHNAHGAGN) is disordered. A lipid anchor (N-myristoyl glycine) is attached at glycine 2. A Glycyl lysine isopeptide (Lys-Gly) (interchain with G-Cter in ISG15) cross-link involves residue lysine 12. Residues 23–295 (RYGLSSMQGW…DNMSIVLVCF (273 aa)) enclose the PPM-type phosphatase domain. 2 residues coordinate Mn(2+): aspartate 60 and glycine 61. Lysine 142 is covalently cross-linked (Glycyl lysine isopeptide (Lys-Gly) (interchain with G-Cter in ISG15)). Mn(2+) is bound by residues aspartate 243 and aspartate 286. Phosphoserine is present on serine 391. The tract at residues 431–484 (EENPAEQAATAASSNSDAGNTVAMQESHTESKSDLAELDSCTEDAGTKMSGEKL) is disordered. The span at 440–456 (TAASSNSDAGNTVAMQE) shows a compositional bias: polar residues.

Belongs to the PP2C family. Monomer. Interacts with PAK6. Interacts with the phosphorylated form of IKBKB/IKKB. It depends on Mg(2+) as a cofactor. The cofactor is Mn(2+). In terms of processing, isgylation negatively regulates its activity. N-myristoylation is essential for the recognition of its substrates for dephosphorylation.

It is found in the cytoplasm. The protein localises to the cytosol. The protein resides in the membrane. The enzyme catalyses O-phospho-L-seryl-[protein] + H2O = L-seryl-[protein] + phosphate. It catalyses the reaction O-phospho-L-threonyl-[protein] + H2O = L-threonyl-[protein] + phosphate. Enzyme with a broad specificity. Dephosphorylates PRKAA1 and PRKAA2. Inhibits TBK1-mediated antiviral signaling by dephosphorylating it at 'Ser-172'. Plays an important role in the termination of TNF-alpha-mediated NF-kappa-B activation through dephosphorylating and inactivating IKBKB/IKKB. The chain is Protein phosphatase 1B (PPM1B) from Bos taurus (Bovine).